The chain runs to 447 residues: MKVTARLTWIEEKILEKLLGNASLTLLYQSSAHKNCVSEMTQKYSLQGSTMTVFHLEKDVVVGVFILENFPRLVSEKPCTCAWFSLKRNNSSGISALFLNTKVIVDSEELIIFSLDGLSLSVTPLRGFTLALNDTVMNGLELNLGHGFLPVECEIFRVDGIKKNPSFIKKMVTAEQHRGKLLSALRAYKPYKDLVSEVRILLVGPVGSGKSSFFNSVKSAFQGHLTRQAIVGSDESSITKQYRVYSIKDGKSGETLPFMLCDSMGLEEGEEAGLCIDDIPHILQGCVPDRYQFNPCEPMKPKHSPHAASPPLKDRIHCVAFVLHINSVNTLSDKMVAKLKKIRKDVVDCGIGYVALLTNVEEYDEVLDDSFANMTETVTSLSQVQNVQKWLNIPIANILMVSNYASERRLEPMKDILVFAALRQMLRAADDALEDLPLEDTGNLAPF.

A TLDc domain is found at 1 to 159 (MKVTARLTWI…PVECEIFRVD (159 aa)).

It belongs to the IFI44 family. In terms of assembly, HA-28 antigen forms a complex with Kb MHC in BALB.B donor cells. Interacts with FKBP5; this interaction modulates IKBKB and IKBKE kinase activities. As to expression, expressed on cells of the hematopoietic lineage. Detected in transformed cell lines of the macrophage and B-cell lineage. Expressed in spleen and bone marrow.

It is found in the cytoplasm. Its function is as follows. Type I interferon-stimulated gene (ISG) that plays a critical role in antiviral and antibacterial activity. During bacterial infection, promotes macrophage differentiation and facilitates inflammatory cytokine secretion. Plays a role in the control of respiratory syncycial virus/RSV infection, reducing the ability of the virus to replicate. Acts as a feedback regulator of IFN responses by negatively regulating IKBKB kinase activity through interaction with FKBP5. Precursor of the histocompatibility antigen HA-28 in BALB.B mice. More generally, minor histocompatibility antigens refer to immunogenic peptide which, when complexed with MHC, can generate an immune response after recognition by specific T-cells. The peptides are derived from polymorphic intracellular proteins, which are cleaved by normal pathways of antigen processing. The binding of these peptides to MHC molecules and its expression on the cell surface can stimulate T-cell responses and thereby trigger graft rejection or graft-versus-host disease (GVHD). More specifically, HA-28 minor antigen is transcribed in the BALB.B donor but not in host C57BL/6 cells. HA-28 is presented to the donor BALB.B cell surface by Kb MHC. This complex HA-28/Kb MHC elicits cytotoxic T-cell response in C57BL/6 mice immunized with BALB.B spleen cells. It induces C57BL/6 mice cells recognition and lysis by CD8 T-cell from BALB.B mice. In Mus musculus (Mouse), this protein is Interferon-induced protein 44-like (Ifi44l).